Reading from the N-terminus, the 335-residue chain is Holliday junction branch migration complex subunit RuvB (335 aa).

The segment at 1 to 181 (MDRIVEIEKY…FGMQFRLEFY (181 aa)) is large ATPase domain (RuvB-L). Residue leucine 20 participates in ATP binding. ADP is bound by residues arginine 21, tyrosine 28, isoleucine 29, glycine 62, leucine 63, glycine 64, lysine 65, threonine 66, and threonine 67. Residues 128-130 (EDY) and arginine 171 each bind ATP. The ADP site is built by tyrosine 181 and arginine 218. A small ATPAse domain (RuvB-S) region spans residues 182–252 (KDSELALILQ…RANEALNSLG (71 aa)). Residues 255–335 (ELGFDAMDLR…LNYEKTLFEE (81 aa)) form a head domain (RuvB-H) region. Residues arginine 309 and arginine 314 each contribute to the DNA site.

It belongs to the RuvB family. In terms of assembly, homohexamer. Forms an RuvA(8)-RuvB(12)-Holliday junction (HJ) complex. HJ DNA is sandwiched between 2 RuvA tetramers; dsDNA enters through RuvA and exits via RuvB. An RuvB hexamer assembles on each DNA strand where it exits the tetramer. Each RuvB hexamer is contacted by two RuvA subunits (via domain III) on 2 adjacent RuvB subunits; this complex drives branch migration. In the full resolvosome a probable DNA-RuvA(4)-RuvB(12)-RuvC(2) complex forms which resolves the HJ.

It is found in the cytoplasm. The enzyme catalyses ATP + H2O = ADP + phosphate + H(+). Its function is as follows. The RuvA-RuvB-RuvC complex processes Holliday junction (HJ) DNA during genetic recombination and DNA repair, while the RuvA-RuvB complex plays an important role in the rescue of blocked DNA replication forks via replication fork reversal (RFR). RuvA specifically binds to HJ cruciform DNA, conferring on it an open structure. The RuvB hexamer acts as an ATP-dependent pump, pulling dsDNA into and through the RuvAB complex. RuvB forms 2 homohexamers on either side of HJ DNA bound by 1 or 2 RuvA tetramers; 4 subunits per hexamer contact DNA at a time. Coordinated motions by a converter formed by DNA-disengaged RuvB subunits stimulates ATP hydrolysis and nucleotide exchange. Immobilization of the converter enables RuvB to convert the ATP-contained energy into a lever motion, pulling 2 nucleotides of DNA out of the RuvA tetramer per ATP hydrolyzed, thus driving DNA branch migration. The RuvB motors rotate together with the DNA substrate, which together with the progressing nucleotide cycle form the mechanistic basis for DNA recombination by continuous HJ branch migration. Branch migration allows RuvC to scan DNA until it finds its consensus sequence, where it cleaves and resolves cruciform DNA. The sequence is that of Holliday junction branch migration complex subunit RuvB from Campylobacter jejuni subsp. jejuni serotype O:2 (strain ATCC 700819 / NCTC 11168).